The sequence spans 107 residues: uncharacterized protein (107 aa).

Residues 1–4 (MSLV) are Cytoplasmic-facing. A helical transmembrane segment spans residues 5–25 (IDIADTIVSLTALIGLIITLI). Over 26-107 (KFHSQNKEDA…ELCRSSDRSK (82 aa)) the chain is Extracellular.

Its subcellular location is the host membrane. This is an uncharacterized protein from Acidianus sp. F28 (AFV-2).